A 558-amino-acid polypeptide reads, in one-letter code: Probable rhamnogalacturonase B (558 aa).

Residues 1-21 (MLLDKLSVLSFLGLAPIFAAA) form the signal peptide. A disulfide bond links C42 and C68. N-linked (GlcNAc...) asparagine glycosylation occurs at N145. D219 functions as the Proton donor in the catalytic mechanism. C221 and C238 are joined by a disulfide. 2 N-linked (GlcNAc...) asparagine glycosylation sites follow: N239 and N254. H294 is an active-site residue. N321 carries an N-linked (GlcNAc...) asparagine glycan. 2 disulfides stabilise this stretch: C344-C350 and C372-C381. Positions 503 to 526 (VGAQEGSTTSAPSFAAPSGAGNSP) are enriched in low complexity. Residues 503–558 (VGAQEGSTTSAPSFAAPSGAGNSPQGPTGASGFGEKGQQGEQGEQGEQGEQGVCYV) form a disordered region.

It belongs to the glycosyl hydrolase 28 family.

The protein localises to the secreted. It catalyses the reaction Endohydrolysis of alpha-D-GalA-(1-&gt;2)-alpha-L-Rha glycosidic bond in the rhamnogalacturonan I backbone with initial inversion of anomeric configuration releasing oligosaccharides with beta-D-GalA at the reducing end.. In terms of biological role, pectinolytic enzymes consist of four classes of enzymes: pectine lyase, polygalacturonase, pectin methylesterase and rhamnogalacturonase. Hydrolyzes alpha-D-galacturonopyranosyl-(1,2)-alpha-L-rhamnopyranosyl linkages in the backbone of the hairy regions of pectins. The protein is Probable rhamnogalacturonase B (rhgB) of Aspergillus niger (strain ATCC MYA-4892 / CBS 513.88 / FGSC A1513).